A 439-amino-acid polypeptide reads, in one-letter code: Xylose isomerase (439 aa).

Residues His101 and Asp104 contribute to the active site. Mg(2+)-binding residues include Glu232, Glu268, His271, Asp296, Asp307, Asp309, and Asp339.

This sequence belongs to the xylose isomerase family. In terms of assembly, homotetramer. Mg(2+) serves as cofactor.

It is found in the cytoplasm. The enzyme catalyses alpha-D-xylose = alpha-D-xylulofuranose. In Actinobacillus pleuropneumoniae serotype 5b (strain L20), this protein is Xylose isomerase.